Reading from the N-terminus, the 257-residue chain is Inositol diphosphatase DSP2 (257 aa).

The Tyrosine-protein phosphatase domain occupies 66 to 251 (NFSMVDNGIF…VSGLKHTPMS (186 aa)). 1D-myo-inositol hexakisphosphate contacts are provided by Ile-168 and Lys-172. The active-site Phosphocysteine intermediate is the Cys-192.

The protein belongs to the protein-tyrosine phosphatase family. Atypical dual-specificity phosphatase Siw14-like subfamily. Expressed in roots, leaves, stems, flowers and siliques.

It carries out the reaction 5-diphospho-1D-myo-inositol 1,2,3,4,6-pentakisphosphate + H2O = 1D-myo-inositol hexakisphosphate + phosphate + H(+). The catalysed reaction is 1,5-bis(diphospho)-1D-myo-inositol 2,3,4,6-tetrakisphosphate + H2O = 1-diphospho-1D-myo-inositol 2,3,4,5,6-pentakisphosphate + phosphate + 2 H(+). The enzyme catalyses 3,5-bis(diphospho)-1D-myo-inositol 1,2,4,6-tetrakisphosphate + H2O = 3-diphospho-1D-myo-inositol 1,2,4,5,6-pentakisphosphate + phosphate + 2 H(+). It catalyses the reaction 6-diphospho-1D-myo-inositol pentakisphosphate + H2O = 1D-myo-inositol hexakisphosphate + phosphate + H(+). Its function is as follows. Cleaves the beta-phosphate at the 5-position of soluble inositol pyrophosphates. Has highest activity on 5-diphosphoinositol 1,2,3,4,6-pentakisphosphate (5-InsP(7)), 1,5-bis-diphosphoinositol 2,3,4,6-tetrakisphosphate (1,5-InsP(8)) and 3,5-InsP(8). Possesses phosphotyrosine phosphatase activity in vitro. Dephosphorylates the phosphoinositides PI(3,5)P2. Hydrolyzes para-nitrophenyl phosphate and O-methylfluorescein phosphate in vitro. This chain is Inositol diphosphatase DSP2, found in Arabidopsis thaliana (Mouse-ear cress).